A 491-amino-acid polypeptide reads, in one-letter code: Glycylpeptide N-tetradecanoyltransferase (491 aa).

45–48 (HKFW) provides a ligand contact to tetradecanoyl-CoA. Residues 53–79 (VPQITGSGASAPMEEGPIDDPKTPADV) are disordered. Residues 182–184 (LCV) and 190–194 (SKRLA) contribute to the tetradecanoyl-CoA site. Leu491 acts as the Proton acceptor; via carboxylate in catalysis.

The protein belongs to the NMT family. In terms of assembly, monomer.

The protein resides in the cytoplasm. The catalysed reaction is N-terminal glycyl-[protein] + tetradecanoyl-CoA = N-tetradecanoylglycyl-[protein] + CoA + H(+). Its function is as follows. Adds a myristoyl group to the N-terminal glycine residue of certain cellular proteins. This is Glycylpeptide N-tetradecanoyltransferase from Cryptococcus neoformans (Filobasidiella neoformans).